A 170-amino-acid chain; its full sequence is CDP-archaeol synthase (170 aa).

The next 5 membrane-spanning stretches (helical) occupy residues 6–26 (LLWA…PVLV), 53–73 (GLIG…FITP), 83–103 (LLLA…GSFF), 114–134 (PAIG…AYPV), and 140–160 (GQII…NYFA).

Belongs to the CDP-archaeol synthase family. Mg(2+) serves as cofactor.

The protein resides in the cell membrane. The catalysed reaction is 2,3-bis-O-(geranylgeranyl)-sn-glycerol 1-phosphate + CTP + H(+) = CDP-2,3-bis-O-(geranylgeranyl)-sn-glycerol + diphosphate. Its pathway is membrane lipid metabolism; glycerophospholipid metabolism. Catalyzes the formation of CDP-2,3-bis-(O-geranylgeranyl)-sn-glycerol (CDP-archaeol) from 2,3-bis-(O-geranylgeranyl)-sn-glycerol 1-phosphate (DGGGP) and CTP. This reaction is the third ether-bond-formation step in the biosynthesis of archaeal membrane lipids. The protein is CDP-archaeol synthase of Thermococcus onnurineus (strain NA1).